The primary structure comprises 411 residues: Bestrophin homolog 26 (411 aa).

4 consecutive transmembrane segments (helical) span residues 30–50 (FTAI…FMVI), 73–93 (SHQE…SSVV), 235–255 (IPIP…YFAV), and 272–292 (TWIT…MGWM).

This sequence belongs to the anion channel-forming bestrophin (TC 1.A.46) family. Calcium-sensitive chloride channel subfamily. In terms of assembly, forms oligomers.

The protein resides in the cell membrane. Functionally, forms chloride channels. The sequence is that of Bestrophin homolog 26 (best-26) from Caenorhabditis elegans.